The following is a 417-amino-acid chain: Phosphoribosylamine--glycine ligase (417 aa).

Positions 107-313 (KQIMAKYEIP…FLEIIEATLE (207 aa)) constitute an ATP-grasp domain. Position 133 to 194 (133 to 194 (LKETWYPVVI…EEMLYGKEAS (62 aa))) interacts with ATP. Glu283 and Asn285 together coordinate Mg(2+).

The protein belongs to the GARS family. It depends on Mg(2+) as a cofactor. Mn(2+) is required as a cofactor.

It carries out the reaction 5-phospho-beta-D-ribosylamine + glycine + ATP = N(1)-(5-phospho-beta-D-ribosyl)glycinamide + ADP + phosphate + H(+). It participates in purine metabolism; IMP biosynthesis via de novo pathway; N(1)-(5-phospho-D-ribosyl)glycinamide from 5-phospho-alpha-D-ribose 1-diphosphate: step 2/2. In Caldanaerobacter subterraneus subsp. tengcongensis (strain DSM 15242 / JCM 11007 / NBRC 100824 / MB4) (Thermoanaerobacter tengcongensis), this protein is Phosphoribosylamine--glycine ligase.